The primary structure comprises 66 residues: Small ribosomal subunit protein bS21 (66 aa).

The protein belongs to the bacterial ribosomal protein bS21 family.

The chain is Small ribosomal subunit protein bS21 from Rickettsia peacockii (strain Rustic).